The sequence spans 676 residues: Head-specific guanylate cyclase (676 aa).

A Guanylate cyclase domain is found at 466 to 593 (TILFSDIVGF…HSVTIANKFE (128 aa)).

It belongs to the adenylyl cyclase class-4/guanylyl cyclase family. In terms of assembly, heterodimer. Head, where it is preferentially expressed in the CNS and the retina. Not found in bodies.

The protein resides in the cytoplasm. The enzyme catalyses GTP = 3',5'-cyclic GMP + diphosphate. Functionally, may have a role in phototransduction. Catalyzes the conversion of GTP to cGMP, a common second messenger that is utilized in a wide variety of cells and signal transduction pathways. A second subunit is required for enzyme activity. This is Head-specific guanylate cyclase (Gycalpha99B) from Drosophila melanogaster (Fruit fly).